A 180-amino-acid chain; its full sequence is MNFGANLLTNYNEELTEKFYRLFPSIPLMLATLAALVISIFFLTYFFYKPIRKNIKKRKQYIQDNIDAANKLKQQSLENLEESNKKLNEAREQASEIINSSKRDAELIVINYKMSAQKKSEEILKKAQLEIKRKEEEFLRTSREEIIDAATIIAKKILIKEIDSNYEKKIIDDISFDSEK.

Residues 26–46 traverse the membrane as a helical segment; sequence IPLMLATLAALVISIFFLTYF.

The protein belongs to the ATPase B chain family. F-type ATPases have 2 components, F(1) - the catalytic core - and F(0) - the membrane proton channel. F(1) has five subunits: alpha(3), beta(3), gamma(1), delta(1), epsilon(1). F(0) has three main subunits: a(1), b(2) and c(10-14). The alpha and beta chains form an alternating ring which encloses part of the gamma chain. F(1) is attached to F(0) by a central stalk formed by the gamma and epsilon chains, while a peripheral stalk is formed by the delta and b chains.

It localises to the cell membrane. In terms of biological role, f(1)F(0) ATP synthase produces ATP from ADP in the presence of a proton or sodium gradient. F-type ATPases consist of two structural domains, F(1) containing the extramembraneous catalytic core and F(0) containing the membrane proton channel, linked together by a central stalk and a peripheral stalk. During catalysis, ATP synthesis in the catalytic domain of F(1) is coupled via a rotary mechanism of the central stalk subunits to proton translocation. Functionally, component of the F(0) channel, it forms part of the peripheral stalk, linking F(1) to F(0). This Mycoplasmopsis pulmonis (strain UAB CTIP) (Mycoplasma pulmonis) protein is ATP synthase subunit b.